The following is a 509-amino-acid chain: 4-aminobutyrate aminotransferase (509 aa).

166–167 (GS) contributes to the pyridoxal 5'-phosphate binding site. A substrate-binding site is contributed by Arg-223. Residue Lys-363 is modified to N6-(pyridoxal phosphate)lysine. Position 387 (Thr-387) interacts with pyridoxal 5'-phosphate.

This sequence belongs to the class-III pyridoxal-phosphate-dependent aminotransferase family. As to quaternary structure, homodimer. Pyridoxal 5'-phosphate serves as cofactor.

It is found in the cytoplasm. It catalyses the reaction 4-aminobutanoate + 2-oxoglutarate = succinate semialdehyde + L-glutamate. In terms of biological role, deaminates gamma-aminobutyric acid (GABA) to succinate-semialdehyde, which in turn is converted to succinate by the succinate semialdehyde dehydrogenase. Not required for the utilization of GABA as nitrogen source. The sequence is that of 4-aminobutyrate aminotransferase (GATA) from Mycosarcoma maydis (Corn smut fungus).